Here is a 91-residue protein sequence, read N- to C-terminus: Large ribosomal subunit protein eL34 (91 aa).

The disordered stretch occupies residues 48 to 69 (RGRPVEMRKLPKTKKRPERPMP).

It belongs to the eukaryotic ribosomal protein eL34 family.

The protein is Large ribosomal subunit protein eL34 (rpl34e) of Pyrococcus horikoshii (strain ATCC 700860 / DSM 12428 / JCM 9974 / NBRC 100139 / OT-3).